The sequence spans 1434 residues: Probable ATP-dependent RNA helicase spindle-E (1434 aa).

The Helicase ATP-binding domain maps to 125-292 (LAAINAHPVI…FATTNSIPPV (168 aa)). An ATP-binding site is contributed by 138–145 (GETGCGKT). The DEAH box motif lies at 238–241 (DEVH). Residues 339–526 (KIIVIIDNME…NSVLKAKVLN (188 aa)) form the Helicase C-terminal domain. The Tudor domain maps to 938 to 1001 (AGDITKGMMV…RLMPRELTEQ (64 aa)).

It belongs to the DEAD box helicase family. DEAH subfamily.

It localises to the cytoplasm. The catalysed reaction is ATP + H2O = ADP + phosphate + H(+). In terms of biological role, probable ATP-binding RNA helicase which plays a central role during spermatogenesis and oogenesis by repressing transposable elements and preventing their mobilization, which is essential for the germline integrity. Acts via the piRNA metabolic process, which mediates the repression of transposable elements during meiosis by forming complexes composed of piRNAs and Piwi and govern the methylation and subsequent repression of transposons. Involved in the repression of LTR retrotransposon copia. Also involved in telomere regulation by repressing specialized telomeric retroelements HeT-A, TAHRE, and TART; Drosophila telomeres being maintained by transposition of specialized telomeric retroelements. Involved in telomeric trans-silencing, a repression mechanism by which a transposon or a transgene inserted in subtelomeric heterochromatin has the capacity to repress in trans in the female germline, a homologous transposon, or transgene located in euchromatin. Involved in the repression of testis-expressed Stellate genes by the homologous Su(Ste) repeats. Required for anteroposterior and dorsoventral axis formation during oogenesis. The protein is Probable ATP-dependent RNA helicase spindle-E (spn-E) of Drosophila sechellia (Fruit fly).